The following is a 95-amino-acid chain: Alpha-conotoxin GeXXA (95 aa).

A signal peptide spans 1–21 (MPKQEKMMLVLLILPLPYCNA). Positions 22–45 (AGVTTVQWGGHGDGLDRYLQRGVR) are excised as a propeptide. 4 cysteine pairs are disulfide-bonded: Cys64/Cys73, Cys69/Cys81, Cys74/Cys91, and Cys79/Cys93.

The protein belongs to the conotoxin D superfamily. As to quaternary structure, homodimer. Pseudo-homodimer (identical sequence, different post-translational modifications). Expressed by the venom duct.

The protein resides in the secreted. In terms of biological role, alpha-D-conopeptides act as non-competitive inhibitors of nicotinic acetylcholine receptors (nAChR). Through its two C-terminal domains, this homodimeric protein would bind to two nAChR allosteric sites, located outside the nAChR C-loop of the principal binding face and at the adjacent binding interface in a clockwise direction. This toxin has strong inhibitory activity on rat alpha-9-alpha-10 (CHRNA9-CHRNA10) (IC(50)=1.2 nM) and a moderate inhibitory activity on human alpha-7 (CHRNA7) (IC(50)=210 nM), rat alpha-3-beta-2 (CHRNA3-CHRNB2) (IC(50)=498 nM), rat alpha-3-beta-4 (CHRNA3-CHRNB4) (IC(50)=614 nM) and rat alpha-1-beta-1-delta-epsilon (CHRNA1-CHRNB1-CHRNE-CHRND) (IC(50)=743 nM) subtypes. Shows a weaker inhibitory activity on human alpha-9-alpha-10 (IC(50)=28 nM) than on the rat channel. This is explained by a different residue in the probable binding site (His-31 in rat alpha-10 and Leu-31 in human). The sequence is that of Alpha-conotoxin GeXXA from Conus generalis (General cone).